Reading from the N-terminus, the 900-residue chain is Methionine--tRNA ligase, cytoplasmic (900 aa).

Residues 74-198 (GWEQDDLTNQ…VLKQQGVLAL (125 aa)) form the GST C-terminal domain. The 'HIGH' region motif lies at 273-283 (PYVNNVPHLGN). Positions 593–597 (KFSKS) match the 'KMSKS' region motif. K596 lines the ATP pocket. At S825 the chain carries Phosphoserine. A Phosphothreonine modification is found at T835. Residues 841–897 (QIQALMDEVTKQGNIVRELKAQKADKNEVAAEVAKLLDLKKQLAVAEGKPPEAPKGK) form the WHEP-TRS domain.

It belongs to the class-I aminoacyl-tRNA synthetase family. Monomer. Part of a multisubunit complex that groups tRNA ligases for Arg (RARS1), Asp (DARS1), Gln (QARS1), Ile (IARS1), Leu (LARS1), Lys (KARS1), Met (MARS1) the bifunctional ligase for Glu and Pro (EPRS1) and the auxiliary subunits AIMP1/p43, AIMP2/p38 and EEF1E1/p18. Forms a linear complex that contains MARS1, EEF1E1, EPRS1 and AIMP2 that is at the core of the multisubunit complex.

The protein resides in the cytoplasm. Its subcellular location is the cytosol. It is found in the nucleus. The protein localises to the nucleolus. The catalysed reaction is tRNA(Met) + L-methionine + ATP = L-methionyl-tRNA(Met) + AMP + diphosphate. Enzyme activity is increased by spermidine, EEF1A1, and when the Mg(2+) concentration is increased from 5 mM to 13 mM (in vitro), possibly by promoting the dissociation of the complex between the enzyme and its product. In terms of biological role, catalyzes the specific attachment of an amino acid to its cognate tRNA in a 2 step reaction: the amino acid (AA) is first activated by ATP to form AA-AMP and then transferred to the acceptor end of the tRNA. Plays a role in the synthesis of ribosomal RNA in the nucleolus. The protein is Methionine--tRNA ligase, cytoplasmic of Homo sapiens (Human).